The following is an 88-amino-acid chain: Small ribosomal subunit protein bS20 (88 aa).

Belongs to the bacterial ribosomal protein bS20 family.

In terms of biological role, binds directly to 16S ribosomal RNA. In Coprothermobacter proteolyticus (strain ATCC 35245 / DSM 5265 / OCM 4 / BT), this protein is Small ribosomal subunit protein bS20.